A 341-amino-acid polypeptide reads, in one-letter code: Glycerol-3-phosphate dehydrogenase [NAD(P)+] (341 aa).

NADPH-binding residues include serine 14, phenylalanine 15, arginine 35, and lysine 108. Positions 108 and 136 each coordinate sn-glycerol 3-phosphate. Alanine 140 is an NADPH binding site. The sn-glycerol 3-phosphate site is built by lysine 191, aspartate 244, serine 254, arginine 255, and asparagine 256. Catalysis depends on lysine 191, which acts as the Proton acceptor. Arginine 255 contacts NADPH. Positions 279 and 281 each coordinate NADPH.

It belongs to the NAD-dependent glycerol-3-phosphate dehydrogenase family.

It is found in the cytoplasm. It catalyses the reaction sn-glycerol 3-phosphate + NAD(+) = dihydroxyacetone phosphate + NADH + H(+). It carries out the reaction sn-glycerol 3-phosphate + NADP(+) = dihydroxyacetone phosphate + NADPH + H(+). The protein operates within membrane lipid metabolism; glycerophospholipid metabolism. Its function is as follows. Catalyzes the reduction of the glycolytic intermediate dihydroxyacetone phosphate (DHAP) to sn-glycerol 3-phosphate (G3P), the key precursor for phospholipid synthesis. This is Glycerol-3-phosphate dehydrogenase [NAD(P)+] from Pseudomonas fluorescens (strain ATCC BAA-477 / NRRL B-23932 / Pf-5).